The primary structure comprises 298 residues: Tyrosine recombinase XerC (298 aa).

The 87-residue stretch at 2–88 folds into the Core-binding (CB) domain; sequence TDLHTDVERY…ALRSFFDWLV (87 aa). The Tyr recombinase domain occupies 109–288; it reads HLPKNIDVDD…DFQHLASVYD (180 aa). Catalysis depends on residues R148, K172, H240, R243, and H266. Catalysis depends on Y275, which acts as the O-(3'-phospho-DNA)-tyrosine intermediate.

The protein belongs to the 'phage' integrase family. XerC subfamily. Forms a cyclic heterotetrameric complex composed of two molecules of XerC and two molecules of XerD, in which XerC interacts with XerD via its C-terminal region, XerD interacts with XerC via its C-terminal region and so on.

Its subcellular location is the cytoplasm. With respect to regulation, ftsK may regulate the catalytic switch between XerC and XerD in the heterotetrameric complex during the two steps of the recombination process. Functionally, site-specific tyrosine recombinase, which acts by catalyzing the cutting and rejoining of the recombining DNA molecules. Binds cooperatively to specific DNA consensus sequences that are separated from XerD binding sites by a short central region, forming the heterotetrameric XerC-XerD complex that recombines DNA substrates. The complex is essential to convert dimers of the bacterial chromosome into monomers to permit their segregation at cell division. It also contributes to the segregational stability of plasmids. In the complex XerC specifically exchanges the top DNA strands. The protein is Tyrosine recombinase XerC of Escherichia coli O45:K1 (strain S88 / ExPEC).